Reading from the N-terminus, the 149-residue chain is D-aminoacyl-tRNA deacylase (149 aa).

The Gly-cisPro motif, important for rejection of L-amino acids signature appears at Gly-137–Pro-138.

It belongs to the DTD family. As to quaternary structure, homodimer.

The protein localises to the cytoplasm. The enzyme catalyses glycyl-tRNA(Ala) + H2O = tRNA(Ala) + glycine + H(+). The catalysed reaction is a D-aminoacyl-tRNA + H2O = a tRNA + a D-alpha-amino acid + H(+). An aminoacyl-tRNA editing enzyme that deacylates mischarged D-aminoacyl-tRNAs. Also deacylates mischarged glycyl-tRNA(Ala), protecting cells against glycine mischarging by AlaRS. Acts via tRNA-based rather than protein-based catalysis; rejects L-amino acids rather than detecting D-amino acids in the active site. By recycling D-aminoacyl-tRNA to D-amino acids and free tRNA molecules, this enzyme counteracts the toxicity associated with the formation of D-aminoacyl-tRNA entities in vivo and helps enforce protein L-homochirality. The protein is D-aminoacyl-tRNA deacylase of Caldicellulosiruptor bescii (strain ATCC BAA-1888 / DSM 6725 / KCTC 15123 / Z-1320) (Anaerocellum thermophilum).